A 2158-amino-acid chain; its full sequence is RNA1 polyprotein (2158 aa).

Positions 1 to 105 (MSFSKMFPGF…VASMYKSICD (105 aa)) are cleaved as a propeptide — removed in mature form. The SF3 helicase domain occupies 367 to 534 (DKIYGENCQH…GEFNTDAPTS (168 aa)). 393 to 400 (GASGCGKS) is an ATP binding site. Residues 801 to 821 (GLILIALNGAFGAVTAFCACW) form a helical membrane-spanning segment. Ser-844 carries the post-translational modification O-(5'-phospho-RNA)-serine. One can recognise a Peptidase C3 domain in the interval 870–1083 (ASDDGFINEG…FVASNATAIF (214 aa)). Catalysis depends on for picornain 3C-like protease activity residues His-910, Asp-946, and Cys-1041. Residues 1376–1511 (DTGFSADYSS…AVPMELHWYT (136 aa)) enclose the RdRp catalytic domain.

It is found in the host membrane. The catalysed reaction is RNA(n) + a ribonucleoside 5'-triphosphate = RNA(n+1) + diphosphate. Its function is as follows. Picornain 3C-like protease is a thiol protease that probably cleaves the polyprotein. This is RNA1 polyprotein from Capsicum annuum (Capsicum pepper).